Consider the following 657-residue polypeptide: 1-deoxy-D-xylulose-5-phosphate synthase (657 aa).

Thiamine diphosphate-binding positions include H73 and 113-115 (SHA). D145 contacts Mg(2+). Thiamine diphosphate is bound by residues 146-147 (GA), N175, Y293, and E375. A Mg(2+)-binding site is contributed by N175.

This sequence belongs to the transketolase family. DXPS subfamily. As to quaternary structure, homodimer. Mg(2+) is required as a cofactor. It depends on thiamine diphosphate as a cofactor.

The catalysed reaction is D-glyceraldehyde 3-phosphate + pyruvate + H(+) = 1-deoxy-D-xylulose 5-phosphate + CO2. The protein operates within metabolic intermediate biosynthesis; 1-deoxy-D-xylulose 5-phosphate biosynthesis; 1-deoxy-D-xylulose 5-phosphate from D-glyceraldehyde 3-phosphate and pyruvate: step 1/1. In terms of biological role, catalyzes the acyloin condensation reaction between C atoms 2 and 3 of pyruvate and glyceraldehyde 3-phosphate to yield 1-deoxy-D-xylulose-5-phosphate (DXP). In Renibacterium salmoninarum (strain ATCC 33209 / DSM 20767 / JCM 11484 / NBRC 15589 / NCIMB 2235), this protein is 1-deoxy-D-xylulose-5-phosphate synthase.